Consider the following 359-residue polypeptide: Innexin inx2 (359 aa).

The Cytoplasmic segment spans residues 1-22 (MFDVFGSVKGLLKLDSVCIDNN). The chain crosses the membrane as a helical span at residues 23–43 (LFRLHYKATVIILIAFSLLVT). The Extracellular portion of the chain corresponds to 44-109 (SRQYIGDPID…KDEVKYHKYY (66 aa)). Residues 110 to 130 (QWVCFVLFFQAILFYIPRYLW) traverse the membrane as a helical segment. Over 131-180 (KTWEGGRIKMLVLDLNSPVVNEQSKADRKKLLVDYFATNLHTQNFYAYRF) the chain is Cytoplasmic. A helical transmembrane segment spans residues 181–201 (FICEALNFVNVVGQIYFMDLF). Over 202 to 266 (LDGEFTTYGS…VLPLNIVNEK (65 aa)) the chain is Extracellular. The chain crosses the membrane as a helical span at residues 267-287 (IYVFLWFWFVILSVLTGIGLV). Over 288–359 (YRLATAMGPQ…AKKLEGKEIV (72 aa)) the chain is Cytoplasmic.

This sequence belongs to the pannexin family. As to expression, widespread expression in embryo, in anterior and posterior row of neural precursors, midline precursors and in epithelial sheet of stomodeum.

Its subcellular location is the cell membrane. The protein resides in the cell junction. It localises to the gap junction. Its function is as follows. Structural components of the gap junctions. This chain is Innexin inx2 (inx2), found in Schistocerca americana (American grasshopper).